A 48-amino-acid chain; its full sequence is Large ribosomal subunit protein bL33A (48 aa).

It belongs to the bacterial ribosomal protein bL33 family.

This chain is Large ribosomal subunit protein bL33A, found in Bacillus mycoides (strain KBAB4) (Bacillus weihenstephanensis).